The sequence spans 67 residues: ATP synthase F(0) complex subunit 8 (67 aa).

The helical transmembrane segment at 8–24 (TWFITIISSMITLFILF) threads the bilayer. Residue K54 is modified to N6-acetyllysine; alternate. K54 carries the post-translational modification N6-succinyllysine; alternate. The residue at position 57 (K57) is an N6-acetyllysine.

Belongs to the ATPase protein 8 family. As to quaternary structure, component of the ATP synthase complex composed at least of ATP5F1A/subunit alpha, ATP5F1B/subunit beta, ATP5MC1/subunit c (homooctomer), MT-ATP6/subunit a, MT-ATP8/subunit 8, ATP5ME/subunit e, ATP5MF/subunit f, ATP5MG/subunit g, ATP5MK/subunit k, ATP5MJ/subunit j, ATP5F1C/subunit gamma, ATP5F1D/subunit delta, ATP5F1E/subunit epsilon, ATP5PF/subunit F6, ATP5PB/subunit b, ATP5PD/subunit d, ATP5PO/subunit OSCP. ATP synthase complex consists of a soluble F(1) head domain (subunits alpha(3) and beta(3)) - the catalytic core - and a membrane F(0) domain - the membrane proton channel (subunits c, a, 8, e, f, g, k and j). These two domains are linked by a central stalk (subunits gamma, delta, and epsilon) rotating inside the F1 region and a stationary peripheral stalk (subunits F6, b, d, and OSCP). Interacts with PRICKLE3.

Its subcellular location is the mitochondrion membrane. Functionally, subunit 8, of the mitochondrial membrane ATP synthase complex (F(1)F(0) ATP synthase or Complex V) that produces ATP from ADP in the presence of a proton gradient across the membrane which is generated by electron transport complexes of the respiratory chain. ATP synthase complex consist of a soluble F(1) head domain - the catalytic core - and a membrane F(1) domain - the membrane proton channel. These two domains are linked by a central stalk rotating inside the F(1) region and a stationary peripheral stalk. During catalysis, ATP synthesis in the catalytic domain of F(1) is coupled via a rotary mechanism of the central stalk subunits to proton translocation. In vivo, can only synthesize ATP although its ATP hydrolase activity can be activated artificially in vitro. Part of the complex F(0) domain. This Mus musculus (Mouse) protein is ATP synthase F(0) complex subunit 8.